We begin with the raw amino-acid sequence, 125 residues long: Small ribosomal subunit protein eS8 (125 aa).

It belongs to the eukaryotic ribosomal protein eS8 family. As to quaternary structure, part of the 30S ribosomal subunit.

In Methanosarcina acetivorans (strain ATCC 35395 / DSM 2834 / JCM 12185 / C2A), this protein is Small ribosomal subunit protein eS8.